We begin with the raw amino-acid sequence, 327 residues long: Serpentine receptor class alpha-12 (327 aa).

The Extracellular segment spans residues 1 to 18; the sequence is MGCASEIQAEIFTSFGQL. A helical transmembrane segment spans residues 19-39; that stretch reads FYASFQTILFLATIIGSLLAI. Over 40–53 the chain is Cytoplasmic; the sequence is FELCKKTTVPDSTR. The helical transmembrane segment at 54–74 threads the bilayer; it reads VLLIGSLFFANAHEFAYFTAP. Residues 75-98 lie on the Extracellular side of the membrane; the sequence is LKVFQLNIFNTNTSCYPLISTRDC. The helical transmembrane segment at 99-119 threads the bilayer; the sequence is IPTTTVLAMGISGNMLIQSAL. The Cytoplasmic portion of the chain corresponds to 120-138; the sequence is SIDRLLATIFPFSYSRMRA. The helical transmembrane segment at 139–159 threads the bilayer; it reads LPGFVLLIMVLIPAMFTYSWI. At 160–185 the chain is on the extracellular side; sequence RLDIVLDDYQMFCSQWSANISTRANT. A helical membrane pass occupies residues 186-206; it reads FLEICSYLTVAHIIINCLIIL. Residues 207–234 are Cytoplasmic-facing; that stretch reads RNRAIEKRCRFDVTQRYLTSENLKTTQA. The helical transmembrane segment at 235–255 threads the bilayer; the sequence is ICYLSIAQFLAMFMYSGGVLL. The Extracellular portion of the chain corresponds to 256–270; sequence MRKNRENIPTLIYFN. The helical transmembrane segment at 271 to 291 threads the bilayer; the sequence is VIVWVYAPPYACVSLAPLILF. Residues 292-327 are Cytoplasmic-facing; that stretch reads SLWNLKKQRHIQIKSVQSAQKETQDDYIRKLQKSWK.

It belongs to the nematode receptor-like protein sra family. Expressed in neurons RIF/RIG and PVT.

It is found in the membrane. The chain is Serpentine receptor class alpha-12 (sra-12) from Caenorhabditis elegans.